The primary structure comprises 933 residues: MSQQSSSPTKEDNNSSSPVVPNPDSVPPQLSSPALFYSSSSSQGDIYGRNNSQNLSQGEGNIRAAIGSSPLNFPSSSQRQNSDVFQSQGRQGRIRSSASASGRSRYHSDLRSDRALPTSSSSLGRNGQNRVHMRRNDIHTSDLSSPRRIVDFDTRSGVNTLDTSSSSAPPSEASEPLRIIWGTNVSIQECTTNFRNFLMSFKYKFRKILDEREEFINNTTDEELYYIKQLNEMRELGTSNLNLDARNLLAYKQTEDLYHQLLNYPQEVISIMDQTIKDCMVSLIVDNNLDYDLDEIETKFYKVRPYNVGSCKGMRELNPNDIDKLINLKGLVLRSTPVIPDMKVAFFKCNVCDHTMAVEIDRGVIQEPARCERIDCNEPNSMSLIHNRCSFADKQVIKLQETPDFVPDGQTPHSISLCVYDELVDSCRAGDRIEVTGTFRSIPIRANSRQRVLKSLYKTYVDVVHVKKVSDKRLDVDTSTIEQELMQNKVDHNEVEEVRQITDQDLAKIREVAAREDLYSLLARSIAPSIYELEDVKKGILLQLFGGTNKTFTKGGRYRGDINILLCGDPSTSKSQILQYVHKITPRGVYTSGKGSSAVGLTAYITRDVDTKQLVLESGALVLSDGGVCCIDEFDKMSDSTRSVLHEVMEQQTISIAKAGIITTLNARSSILASANPIGSRYNPNLPVTENIDLPPPLLSRFDLVYLVLDKVDEKNDRELAKHLTNLYLEDKPEHISQDDVLPVEFLTMYISYAKEHIHPIITEAAKTELVRAYVGMRKMGDDSRSDEKRITATTRQLESMIRLAEAHAKMKLKNVVELEDVQEAVRLIRSAIKDYATDPKTGKIDMNLVQTGKSVIQRKLQEDLSREIMNVLKDQASDSMSFNELIKQINEHSQDRVESSDIQEALSRLQQEDKVIVLGEGVRRSVRLNNRV.

Disordered stretches follow at residues 1 to 149 (MSQQ…PRRI) and 154 to 173 (TRSGVNTLDTSSSSAPPSEA). The segment covering 27 to 42 (PPQLSSPALFYSSSSS) has biased composition (low complexity). Composition is skewed to polar residues over residues 49–59 (RNNSQNLSQGE) and 69–85 (SPLNFPSSSQRQNSDVF). Phosphoserine occurs at positions 52, 56, and 69. Over residues 86–103 (QSQGRQGRIRSSASASGR) the composition is skewed to low complexity. The segment covering 117–129 (PTSSSSLGRNGQN) has biased composition (polar residues). The span at 164–173 (SSSSAPPSEA) shows a compositional bias: low complexity. The MCM domain occupies 518–725 (LYSLLARSIA…NDRELAKHLT (208 aa)). 568–575 (GDPSTSKS) lines the ATP pocket. Residues 700-703 (SRFD) carry the Arginine finger motif.

Belongs to the MCM family. In terms of assembly, component of the MCM2-7 complex. The complex forms a toroidal hexameric ring with the proposed subunit order MCM2-MCM6-MCM4-MCM7-MCM3-MCM5; loaded onto DNA, forms a head-head double hexamer.

It localises to the nucleus. It catalyses the reaction ATP + H2O = ADP + phosphate + H(+). Acts as a component of the MCM2-7 complex (MCM complex) which is the putative replicative helicase essential for 'once per cell cycle' DNA replication initiation and elongation in eukaryotic cells. The active ATPase sites in the MCM2-7 ring are formed through the interaction surfaces of two neighboring subunits such that a critical structure of a conserved arginine finger motif is provided in trans relative to the ATP-binding site of the Walker A box of the adjacent subunit. The six ATPase active sites, however, are likely to contribute differentially to the complex helicase activity. Once loaded onto DNA, double hexamers can slide on dsDNA in the absence of ATPase activity. Required for S phase execution. The polypeptide is DNA replication licensing factor MCM4 (MCM4) (Saccharomyces cerevisiae (strain ATCC 204508 / S288c) (Baker's yeast)).